We begin with the raw amino-acid sequence, 111 residues long: Type III endosome membrane protein TEMP (111 aa).

Topologically, residues 1–27 (MIGGNTTIISGAINASTEAPGLGTGGR) are extracellular. N-linked (GlcNAc...) asparagine glycosylation is present at N5. Residues 28–48 (AWPVLVGVVLGAVVLSILIAL) traverse the membrane as a helical; Signal-anchor for type III membrane protein segment. At 49–111 (AAKCHLCRRY…TTGSRDHFSL (63 aa)) the chain is on the cytoplasmic side. A disordered region spans residues 64-111 (HRPLSSAGGGNRPPVGEDEDDDGFIEDNYIQPGAGEMETTGSRDHFSL). Positions 79–88 (GEDEDDDGFI) are enriched in acidic residues.

As to expression, expressed in stomach, kidney, large and small intestine and kidney.

It is found in the membrane. Its subcellular location is the early endosome. It localises to the recycling endosome. The protein localises to the cell membrane. Its function is as follows. May be involved in membrane trafficking between endosomes and plasma membrane. This is Type III endosome membrane protein TEMP from Mus musculus (Mouse).